The primary structure comprises 43 residues: Potassium channel toxin gamma-KTx 3.3 (43 aa).

4 disulfides stabilise this stretch: Cys-5-Cys-23, Cys-11-Cys-34, Cys-20-Cys-39, and Cys-24-Cys-41.

Belongs to the ergtoxin family. Gamma-KTx 3 subfamily. Expressed by the venom gland.

It localises to the secreted. In terms of biological role, blocks Kv11/ERG potassium channels. The chain is Potassium channel toxin gamma-KTx 3.3 from Centruroides sculpturatus (Arizona bark scorpion).